The sequence spans 137 residues: uncharacterized protein (137 aa).

This is an uncharacterized protein from Archaeoglobus fulgidus (strain ATCC 49558 / DSM 4304 / JCM 9628 / NBRC 100126 / VC-16).